Consider the following 643-residue polypeptide: Threonine--tRNA ligase 1 (643 aa).

The region spanning 3-64 (DMVKITFPDG…NEDGTVEIIT (62 aa)) is the TGS domain. The tract at residues 245 to 542 (DHRKLGKELK…LIEEHKGALP (298 aa)) is catalytic. Cys-338, His-389, and His-519 together coordinate Zn(2+).

Belongs to the class-II aminoacyl-tRNA synthetase family. In terms of assembly, homodimer. Requires Zn(2+) as cofactor.

Its subcellular location is the cytoplasm. The catalysed reaction is tRNA(Thr) + L-threonine + ATP = L-threonyl-tRNA(Thr) + AMP + diphosphate + H(+). In terms of biological role, catalyzes the attachment of threonine to tRNA(Thr) in a two-step reaction: L-threonine is first activated by ATP to form Thr-AMP and then transferred to the acceptor end of tRNA(Thr). Also edits incorrectly charged L-seryl-tRNA(Thr). The protein is Threonine--tRNA ligase 1 (thrS) of Bacillus subtilis (strain 168).